A 350-amino-acid chain; its full sequence is Pleckstrin (350 aa).

The PH 1 domain occupies 4–101 (KRIREGYLVK…WVRDIKKAIK (98 aa)). Lys-64 carries the post-translational modification N6-acetyllysine. A phosphoserine; by PKC mark is found at Ser-113 and Ser-117. The 86-residue stretch at 136-221 (TEKGIKELNL…NPDAFYYFPD (86 aa)) folds into the DEP domain. Residues 244–347 (VIIKQGCLLK…WIRAIQMASR (104 aa)) enclose the PH 2 domain.

Functionally, major protein kinase C substrate of platelets. This chain is Pleckstrin (PLEK), found in Homo sapiens (Human).